The chain runs to 426 residues: Serine protease HTRA2, mitochondrial (426 aa).

A mitochondrion-targeting transit peptide spans 1–30 (MALRGSHRLDDFIRRCSALTLFHSQAPSRR). The tract at residues 30–59 (RVSHCGRDRRQQQDPPGQGRQEQQESGGGH) is disordered. Positions 31-78 (VSHCGRDRRQQQDPPGQGRQEQQESGGGHWSRFGWRSLIRFFVPFSLG) are excised as a propeptide. A compositionally biased stretch (low complexity) spans 42-54 (QDPPGQGRQEQQE). The chain crosses the membrane as a helical span at residues 68–86 (LIRFFVPFSLGAVASSLVI). Positions 79-82 (AVAS) match the IAP-binding motif. Positions 143–306 (SNGSGFIIEQ…IPIDYVKVFL (164 aa)) are serine protease. Residues His-161, Asp-193, and Ser-270 each act as charge relay system in the active site. Residues 329-414 (MGITMLTLTP…HLDIVILRGV (86 aa)) form the PDZ domain.

This sequence belongs to the peptidase S1C family. Interacts with th/DIAP1 (via BIR 2 domain).

The protein resides in the mitochondrion intermembrane space. The protein localises to the mitochondrion membrane. It carries out the reaction Cleavage of non-polar aliphatic amino-acids at the P1 position, with a preference for Val, Ile and Met. At the P2 and P3 positions, Arg is selected most strongly with a secondary preference for other hydrophilic residues.. Functionally, serine protease that shows proteolytic activity against a non-specific substrate beta-casein. Promotes or induces cell death either by direct binding to and inhibition of BIRC proteins (also called inhibitor of apoptosis proteins, IAPs), leading to an increase in caspase activity, or by a BIRC inhibition-independent, caspase-independent and serine protease activity-dependent mechanism. Can antagonize antiapoptotic activity of th/Diap1 by directly inducing the degradation of th/Diap1. This chain is Serine protease HTRA2, mitochondrial, found in Drosophila ananassae (Fruit fly).